The primary structure comprises 337 residues: F420-dependent glucose-6-phosphate dehydrogenase (337 aa).

Position 40 (aspartate 40) interacts with coenzyme F420-(gamma-Glu)n. Histidine 41 serves as the catalytic Proton donor. Residues threonine 77 and 108–109 contribute to the coenzyme F420-(gamma-Glu)n site; that span reads SG. Catalysis depends on glutamate 110, which acts as the Proton acceptor. Residues asparagine 113, 178–179, and 181–182 each bind coenzyme F420-(gamma-Glu)n; these read GG and VV. The substrate site is built by threonine 196, lysine 199, lysine 260, and arginine 284.

This sequence belongs to the F420-dependent glucose-6-phosphate dehydrogenase family. As to quaternary structure, homodimer.

It catalyses the reaction oxidized coenzyme F420-(gamma-L-Glu)(n) + D-glucose 6-phosphate + H(+) = 6-phospho-D-glucono-1,5-lactone + reduced coenzyme F420-(gamma-L-Glu)(n). In terms of biological role, catalyzes the coenzyme F420-dependent oxidation of glucose 6-phosphate (G6P) to 6-phosphogluconolactone. The polypeptide is F420-dependent glucose-6-phosphate dehydrogenase (Rhodococcus erythropolis (strain PR4 / NBRC 100887)).